An 848-amino-acid chain; its full sequence is DNA-binding protein RFX6 (848 aa).

The segment at residues 56-131 (TLQWLEDNYI…YHYYGIGIKE (76 aa)) is a DNA-binding region (RFX-type winged-helix).

It belongs to the RFX family. In terms of tissue distribution, expressed in progenitors and hormone expressing cells of the islet lineage.

Its subcellular location is the nucleus. Functionally, transcription factor required to direct islet cell differentiation during endocrine pancreas development. The polypeptide is DNA-binding protein RFX6 (rfx6) (Danio rerio (Zebrafish)).